The primary structure comprises 481 residues: Glutamyl-tRNA(Gln) amidotransferase subunit A (481 aa).

Residues lysine 74 and serine 149 each act as charge relay system in the active site. The active-site Acyl-ester intermediate is serine 173.

This sequence belongs to the amidase family. GatA subfamily. As to quaternary structure, heterotrimer of A, B and C subunits.

It carries out the reaction L-glutamyl-tRNA(Gln) + L-glutamine + ATP + H2O = L-glutaminyl-tRNA(Gln) + L-glutamate + ADP + phosphate + H(+). Its function is as follows. Allows the formation of correctly charged Gln-tRNA(Gln) through the transamidation of misacylated Glu-tRNA(Gln) in organisms which lack glutaminyl-tRNA synthetase. The reaction takes place in the presence of glutamine and ATP through an activated gamma-phospho-Glu-tRNA(Gln). In Francisella tularensis subsp. tularensis (strain FSC 198), this protein is Glutamyl-tRNA(Gln) amidotransferase subunit A.